An 83-amino-acid polypeptide reads, in one-letter code: NAD(P)H-quinone oxidoreductase subunit L (83 aa).

The next 2 helical transmembrane spans lie at 15–35 (LLVL…VPLA) and 53–73 (LGIY…APFL).

The protein belongs to the complex I NdhL subunit family. NDH-1 can be composed of about 15 different subunits; different subcomplexes with different compositions have been identified which probably have different functions.

The protein resides in the cellular thylakoid membrane. It carries out the reaction a plastoquinone + NADH + (n+1) H(+)(in) = a plastoquinol + NAD(+) + n H(+)(out). It catalyses the reaction a plastoquinone + NADPH + (n+1) H(+)(in) = a plastoquinol + NADP(+) + n H(+)(out). NDH-1 shuttles electrons from an unknown electron donor, via FMN and iron-sulfur (Fe-S) centers, to quinones in the respiratory and/or the photosynthetic chain. The immediate electron acceptor for the enzyme in this species is believed to be plastoquinone. Couples the redox reaction to proton translocation, and thus conserves the redox energy in a proton gradient. Cyanobacterial NDH-1 also plays a role in inorganic carbon-concentration. This is NAD(P)H-quinone oxidoreductase subunit L from Synechococcus sp. (strain CC9605).